We begin with the raw amino-acid sequence, 615 residues long: Aspartokinase (615 aa).

Disordered regions lie at residues 84–105 and 127–171; these read ALQP…GTAT and SSVS…SISQ. Low complexity-rich tracts occupy residues 90-102 and 127-164; these read SSSG…SMSG and SSVS…ATPS. The 71-residue stretch at 467-537 folds into the ACT domain; it reads IHSNRKTLSH…EVTVSKDMAI (71 aa).

This sequence belongs to the aspartokinase family.

It carries out the reaction L-aspartate + ATP = 4-phospho-L-aspartate + ADP. The protein operates within amino-acid biosynthesis; L-methionine biosynthesis via de novo pathway; L-homoserine from L-aspartate: step 1/3. It functions in the pathway amino-acid biosynthesis; L-threonine biosynthesis; L-threonine from L-aspartate: step 1/5. In terms of biological role, phosphorylates aspartate, the first step in the biosynthesis of amino acids that derive from aspartate (the aspartate family of amino acids), including methioinine and threonine, the latter of which is a precursor to isoleucine. The polypeptide is Aspartokinase (Cryptococcus neoformans var. grubii serotype A (strain H99 / ATCC 208821 / CBS 10515 / FGSC 9487) (Filobasidiella neoformans var. grubii)).